The chain runs to 331 residues: Aspartate carbamoyltransferase catalytic subunit (331 aa).

Carbamoyl phosphate-binding residues include Arg-66 and Thr-67. Lys-94 provides a ligand contact to L-aspartate. Residues Arg-116, His-149, and Gln-152 each coordinate carbamoyl phosphate. Positions 189 and 243 each coordinate L-aspartate. Gly-284 and Pro-285 together coordinate carbamoyl phosphate.

It belongs to the aspartate/ornithine carbamoyltransferase superfamily. ATCase family. Heterododecamer (2C3:3R2) of six catalytic PyrB chains organized as two trimers (C3), and six regulatory PyrI chains organized as three dimers (R2).

It catalyses the reaction carbamoyl phosphate + L-aspartate = N-carbamoyl-L-aspartate + phosphate + H(+). It functions in the pathway pyrimidine metabolism; UMP biosynthesis via de novo pathway; (S)-dihydroorotate from bicarbonate: step 2/3. Functionally, catalyzes the condensation of carbamoyl phosphate and aspartate to form carbamoyl aspartate and inorganic phosphate, the committed step in the de novo pyrimidine nucleotide biosynthesis pathway. The chain is Aspartate carbamoyltransferase catalytic subunit from Thermosynechococcus vestitus (strain NIES-2133 / IAM M-273 / BP-1).